The chain runs to 224 residues: UPF0441 protein PC1_0312 (224 aa).

Residues 178–224 (PKTALAPKPATTSTITRGGFGETVAKQNSMQRSSASSSSSSSRSMGG) form a disordered region. Over residues 209–224 (RSSASSSSSSSRSMGG) the composition is skewed to low complexity.

This sequence belongs to the UPF0441 family.

The polypeptide is UPF0441 protein PC1_0312 (Pectobacterium carotovorum subsp. carotovorum (strain PC1)).